Here is a 486-residue protein sequence, read N- to C-terminus: Glutamyl-tRNA(Gln) amidotransferase subunit A (486 aa).

Residues K75 and S150 each act as charge relay system in the active site. S174 serves as the catalytic Acyl-ester intermediate.

The protein belongs to the amidase family. GatA subfamily. As to quaternary structure, heterotrimer of A, B and C subunits.

It catalyses the reaction L-glutamyl-tRNA(Gln) + L-glutamine + ATP + H2O = L-glutaminyl-tRNA(Gln) + L-glutamate + ADP + phosphate + H(+). In terms of biological role, allows the formation of correctly charged Gln-tRNA(Gln) through the transamidation of misacylated Glu-tRNA(Gln) in organisms which lack glutaminyl-tRNA synthetase. The reaction takes place in the presence of glutamine and ATP through an activated gamma-phospho-Glu-tRNA(Gln). The chain is Glutamyl-tRNA(Gln) amidotransferase subunit A from Trichormus variabilis (strain ATCC 29413 / PCC 7937) (Anabaena variabilis).